Consider the following 123-residue polypeptide: cAMP-responsive element-binding protein-like 2 (123 aa).

The tract at residues 1-24 is disordered; the sequence is MDDSKVVGGKVKKPGKRGRKPAKI. Basic residues predominate over residues 10 to 21; sequence KVKKPGKRGRKP. A bZIP domain is found at 23–86; it reads KIDLKAKLER…MAMDQGKIPS (64 aa). The segment at 29 to 60 is basic motif; sequence KLERSRQSARECRARKKLRYQYLEELVSSRER. The tract at residues 62–69 is leucine-zipper; that stretch reads ICALREEL. The segment at 93-123 is disordered; it reads TGEEQNKSQQNSSRHPKAGKTDANTNSLVGN. Residues 114 to 123 are compositionally biased toward polar residues; sequence DANTNSLVGN.

This sequence belongs to the bZIP family. ATF subfamily. In terms of assembly, interacts with CREB1; regulates CREB1 phosphorylation, stability and transcriptional activity. Phosphorylated by AMPK.

It localises to the nucleus. In terms of biological role, probable regulator of CREB1 transcriptional activity which is involved in adipose cells differentiation. May also play a regulatory role in the cell cycle. This chain is cAMP-responsive element-binding protein-like 2 (Crebl2), found in Rattus norvegicus (Rat).